The following is a 247-amino-acid chain: Triosephosphate isomerase (247 aa).

8 to 10 is a substrate binding site; the sequence is NWK. Catalysis depends on His-94, which acts as the Electrophile. Glu-165 acts as the Proton acceptor in catalysis. Gly-171 and Ser-210 together coordinate substrate.

It belongs to the triosephosphate isomerase family. As to quaternary structure, homodimer.

Its subcellular location is the cytoplasm. The catalysed reaction is D-glyceraldehyde 3-phosphate = dihydroxyacetone phosphate. Its pathway is carbohydrate biosynthesis; gluconeogenesis. It functions in the pathway carbohydrate degradation; glycolysis; D-glyceraldehyde 3-phosphate from glycerone phosphate: step 1/1. Involved in the gluconeogenesis. Catalyzes stereospecifically the conversion of dihydroxyacetone phosphate (DHAP) to D-glyceraldehyde-3-phosphate (G3P). The chain is Triosephosphate isomerase from Aquifex aeolicus (strain VF5).